The following is a 395-amino-acid chain: NAD(P)H-quinone oxidoreductase subunit H (395 aa).

This sequence belongs to the complex I 49 kDa subunit family. NDH-1 can be composed of about 15 different subunits; different subcomplexes with different compositions have been identified which probably have different functions.

The protein localises to the cellular thylakoid membrane. It catalyses the reaction a plastoquinone + NADH + (n+1) H(+)(in) = a plastoquinol + NAD(+) + n H(+)(out). It carries out the reaction a plastoquinone + NADPH + (n+1) H(+)(in) = a plastoquinol + NADP(+) + n H(+)(out). In terms of biological role, NDH-1 shuttles electrons from an unknown electron donor, via FMN and iron-sulfur (Fe-S) centers, to quinones in the respiratory and/or the photosynthetic chain. The immediate electron acceptor for the enzyme in this species is believed to be plastoquinone. Couples the redox reaction to proton translocation, and thus conserves the redox energy in a proton gradient. Cyanobacterial NDH-1 also plays a role in inorganic carbon-concentration. The polypeptide is NAD(P)H-quinone oxidoreductase subunit H (Prochlorococcus marinus (strain MIT 9301)).